Consider the following 266-residue polypeptide: Killer cell lectin-like receptor 3 (266 aa).

Topologically, residues 1-48 (MSEPEVTYSTVRLHKSSGLQKLVRHEETQGPREVGNRKCSAPWQLIVK) are cytoplasmic. The helical; Signal-anchor for type II membrane protein transmembrane segment at 49–69 (ALGILCFLLLVTVAVLAVKIF) threads the bilayer. The Extracellular segment spans residues 70 to 266 (QYNQHKQEIN…CGKKLDKFPD (197 aa)). Asn79, Asn87, Asn104, and Asn113 each carry an N-linked (GlcNAc...) asparagine glycan. Residues 147–151 (WFCYS) are involved in dimerization. Cys149 and Cys154 are oxidised to a cystine. The 109-residue stretch at 150 to 258 (YSTKCYYFIM…CNIPYYCICG (109 aa)) folds into the C-type lectin domain. The N-linked (GlcNAc...) asparagine glycan is linked to Asn160. 5 implicated in MHC class I binding regions span residues 160-162 (NKT), 195-196 (IP), 207-208 (KK), 224-233 (MKIRKMNFKS), and 240-245 (SKARIE). Cystine bridges form between Cys167–Cys255, Cys171–Cys257, and Cys236–Cys249.

Homodimer; disulfide-linked.

The protein localises to the membrane. Functionally, receptor on natural killer (NK) cells for class I MHC. The protein is Killer cell lectin-like receptor 3 (Klra3) of Mus musculus (Mouse).